The sequence spans 292 residues: Syntaxin-19 (292 aa).

The t-SNARE coiled-coil homology domain maps to 207 to 269 (LSEIEQRHKE…NNTKEKFGLA (63 aa)).

This sequence belongs to the syntaxin family. Interacts with EGFR. Expressed in stomach, lung and skin (at protein level). In stomach, strongly expressed in the mucosa of the fundus, in epithelial cells of gastric pits, and in gastric glands (at protein level). In skin, expressed in the epidermis, dermis, and epithelial layer of the hair bulb (at protein level).

The protein localises to the cell membrane. Its subcellular location is the cytoplasm. Functionally, plays a role in endosomal trafficking of the epidermal growth factor receptor (EGFR). This chain is Syntaxin-19, found in Mus musculus (Mouse).